The following is a 222-amino-acid chain: Probable GTP-binding protein EngB (222 aa).

Residues 22 to 197 (TSAEIAFVGR…ETVVAGWFAG (176 aa)) form the EngB-type G domain. Residues S37 and T59 each coordinate Mg(2+). Residues 201–222 (RQADELTDGEPDDRTPDPDSAS) are disordered. Basic and acidic residues predominate over residues 212–222 (DDRTPDPDSAS).

It belongs to the TRAFAC class TrmE-Era-EngA-EngB-Septin-like GTPase superfamily. EngB GTPase family. Mg(2+) is required as a cofactor.

Its function is as follows. Necessary for normal cell division and for the maintenance of normal septation. This is Probable GTP-binding protein EngB from Laribacter hongkongensis (strain HLHK9).